The following is a 62-amino-acid chain: LECHNQQSIQTPTTTGCSGGETNCYKKRWRDHRGYRTERGCGCPSVKNGIEINCCTTDRCNN.

Residues 1 to 16 show a composition bias toward polar residues; that stretch reads LECHNQQSIQTPTTTG. The disordered stretch occupies residues 1 to 20; the sequence is LECHNQQSIQTPTTTGCSGG. Intrachain disulfides connect C3-C24, C17-C41, C43-C54, and C55-C60.

Belongs to the three-finger toxin family. Short-chain subfamily. Type I alpha-neurotoxin sub-subfamily. Expressed by the venom gland.

It is found in the secreted. Its function is as follows. Binds to muscle nicotinic acetylcholine receptor (nAChR) and inhibit acetylcholine from binding to the receptor, thereby impairing neuromuscular transmission. The protein is Short neurotoxin 1 of Naja kaouthia (Monocled cobra).